Consider the following 156-residue polypeptide: Small ribosomal subunit protein uS7 (156 aa).

Belongs to the universal ribosomal protein uS7 family. As to quaternary structure, part of the 30S ribosomal subunit. Contacts proteins S9 and S11.

In terms of biological role, one of the primary rRNA binding proteins, it binds directly to 16S rRNA where it nucleates assembly of the head domain of the 30S subunit. Is located at the subunit interface close to the decoding center, probably blocks exit of the E-site tRNA. The chain is Small ribosomal subunit protein uS7 from Nitrosomonas eutropha (strain DSM 101675 / C91 / Nm57).